A 663-amino-acid chain; its full sequence is Transmembrane 9 superfamily member 2 (663 aa).

A signal peptide spans 1–28 (MSARLPVLSPPRWPRLLLLSLLLLGAVP). Over 29–300 (GPRRSGAFYL…LESMPHTHIQ (272 aa)) the chain is Lumenal. Residues 301–321 (WFSIMNSLVIVLFLSGMVAMI) form a helical membrane-spanning segment. The Cytoplasmic segment spans residues 322–374 (MLRTLHKDIARYNQMDSTEDAQEEFGWKLVHGDIFRPPRKGMLLSVFLGSGTQ). Residues 375 to 395 (ILIMTFVTLFFACLGFLSPAN) traverse the membrane as a helical segment. Residues 396–398 (RGA) are Lumenal-facing. The helical transmembrane segment at 399 to 419 (LMTCAVVLWVLLGTPAGYVAA) threads the bilayer. Over 420-437 (RFYKSFGGEKWKTNVLLT) the chain is Cytoplasmic. Residues 438-458 (SFLCPGIVFADFFIMNLILWG) traverse the membrane as a helical segment. At 459 to 466 (EGSSAAIP) the chain is on the lumenal side. Residues 467–487 (FGTLVAILALWFCISVPLTFI) traverse the membrane as a helical segment. The Cytoplasmic segment spans residues 488 to 522 (GAYFGFKKNAIEHPVRTNQIPRQIPEQSFYTKPLP). A helical transmembrane segment spans residues 523 to 543 (GIIMGGILPFGCIFIQLFFIL). Residues 544 to 554 (NSIWSHQMYYM) are Lumenal-facing. A helical transmembrane segment spans residues 555–575 (FGFLFLVFIILVITCSEATIL). Residues 576–591 (LCYFHLCAEDYHWQWR) are Cytoplasmic-facing. The chain crosses the membrane as a helical span at residues 592–612 (SFLTSGFTAVYFLIYAVHYFF). Residues 613-631 (SKLQITGTASTILYFGYTM) lie on the Lumenal side of the membrane. A helical membrane pass occupies residues 632-652 (IMVLIFFLFTGTIGFFACFWF). Residues 653-663 (VTKIYSVVKVD) lie on the Cytoplasmic side of the membrane.

This sequence belongs to the nonaspanin (TM9SF) (TC 9.A.2) family. Ubiquitously expressed. Especially abundant in pancreas, highly expressed in kidney, lower levels in heart, brain, skeletal muscle and placenta. Lowest expression in lung and liver.

Its subcellular location is the endosome membrane. It is found in the golgi outpost. The protein resides in the cytoplasm. The protein localises to the cytoskeleton. It localises to the microtubule organizing center. Its function is as follows. In the intracellular compartments, may function as a channel or small molecule transporter. This Homo sapiens (Human) protein is Transmembrane 9 superfamily member 2 (TM9SF2).